The sequence spans 110 residues: Red pigment-concentrating prohormone (110 aa).

Positions 1 to 25 (MVRRTGVTLLVVALVVVALVSSVSA) are cleaved as a signal peptide. Pyrrolidone carboxylic acid is present on glutamine 26. Tryptophan amide is present on tryptophan 33.

Belongs to the AKH/HRTH/RPCH family.

It localises to the secreted. Functionally, this hormone adapts the animal to light backgrounds by stimulating concentration of the pigment of its red body-chromatophores. This chain is Red pigment-concentrating prohormone, found in Carcinus maenas (Common shore crab).